The following is a 286-amino-acid chain: Tryptophan 2,3-dioxygenase (286 aa).

Substrate is bound by residues 55–59 (FIIIH), Y117, and R121. A heme-binding site is contributed by H244. T258 contacts substrate.

It belongs to the tryptophan 2,3-dioxygenase family. Homotetramer. It depends on heme as a cofactor.

The catalysed reaction is L-tryptophan + O2 = N-formyl-L-kynurenine. It participates in amino-acid degradation; L-tryptophan degradation via kynurenine pathway; L-kynurenine from L-tryptophan: step 1/2. In terms of biological role, heme-dependent dioxygenase that catalyzes the oxidative cleavage of the L-tryptophan (L-Trp) pyrrole ring and converts L-tryptophan to N-formyl-L-kynurenine. Catalyzes the oxidative cleavage of the indole moiety. This chain is Tryptophan 2,3-dioxygenase, found in Shewanella woodyi (strain ATCC 51908 / MS32).